The sequence spans 441 residues: CBL-interacting serine/threonine-protein kinase 3 (441 aa).

The Protein kinase domain occupies 14–269; it reads YEVGRTIGEG…PQEVFEDEWF (256 aa). Residues 20-28 and K43 each bind ATP; that span reads IGEGTFAKV. D137 (proton acceptor) is an active-site residue. The segment at 155-184 is activation loop; it reads DFGLSALSQQVRDDGLLHTSCGTPNYVAPE. The 25-residue stretch at 307–331 folds into the NAF domain; that stretch reads EQPAAINAFEIISMSRGLNLENLFD. Residues 337–366 are PPI; sequence KRETRITLRGGANEIIEKIEEAAKPLGFDV.

It belongs to the protein kinase superfamily. CAMK Ser/Thr protein kinase family. SNF1 subfamily. Interacts with CBL3 and CBL9. It depends on Mn(2+) as a cofactor. In terms of tissue distribution, mostly expressed in germinating seeds and young seedlings. Detected at low levels in roots, stems, leaves and flowers.

The catalysed reaction is L-seryl-[protein] + ATP = O-phospho-L-seryl-[protein] + ADP + H(+). The enzyme catalyses L-threonyl-[protein] + ATP = O-phospho-L-threonyl-[protein] + ADP + H(+). Its function is as follows. Involved in the resistance to some abiotic stresses (e.g. high salt, hyperosmotic stress) in young seedlings, by regulating the expression of several stress-inducible genes (cold- and salt-induced genes but not drought-responsive genes). Required for the ABA response during germination. CIPK serine-threonine protein kinases interact with CBL proteins. Binding of a CBL protein to the regulatory NAF domain of CIPK protein lead to the activation of the kinase in a calcium-dependent manner. The CBL9/CIPK3 complex acts in the regulation of abscisic acid response in seed germination. In Arabidopsis thaliana (Mouse-ear cress), this protein is CBL-interacting serine/threonine-protein kinase 3 (CIPK3).